The primary structure comprises 308 residues: D-alanine--D-alanine ligase (308 aa).

The region spanning 102 to 302 (KHVAKAAGIP…FGEFLRWMVE (201 aa)) is the ATP-grasp domain. 128–183 (PMKPPYVVKPVREGSSFGVVIVKEDQSHPPQVITSSEWRYGDRVMVERYIAGREFT) is an ATP binding site. Mg(2+)-binding residues include Asp-252, Glu-269, and Asn-271.

The protein belongs to the D-alanine--D-alanine ligase family. Requires Mg(2+) as cofactor. Mn(2+) serves as cofactor.

The protein localises to the cytoplasm. The enzyme catalyses 2 D-alanine + ATP = D-alanyl-D-alanine + ADP + phosphate + H(+). The protein operates within cell wall biogenesis; peptidoglycan biosynthesis. Cell wall formation. This Rhizobium meliloti (strain 1021) (Ensifer meliloti) protein is D-alanine--D-alanine ligase.